A 629-amino-acid polypeptide reads, in one-letter code: tRNA uridine 5-carboxymethylaminomethyl modification enzyme MnmG (629 aa).

Residues glycine 13–glycine 18, valine 125, and serine 180 contribute to the FAD site. Glycine 273–phenylalanine 287 contacts NAD(+). Residue glutamine 370 participates in FAD binding.

It belongs to the MnmG family. As to quaternary structure, homodimer. Heterotetramer of two MnmE and two MnmG subunits. The cofactor is FAD.

It is found in the cytoplasm. Functionally, NAD-binding protein involved in the addition of a carboxymethylaminomethyl (cmnm) group at the wobble position (U34) of certain tRNAs, forming tRNA-cmnm(5)s(2)U34. The chain is tRNA uridine 5-carboxymethylaminomethyl modification enzyme MnmG from Citrobacter koseri (strain ATCC BAA-895 / CDC 4225-83 / SGSC4696).